A 165-amino-acid chain; its full sequence is MSSTFSGDETAPFFGFLGAAAALVFSCMGAAYGTAKSGVGVASMGVMRPELVMKSIVPVVMAGVLGIYGLIIAVIISTGINPKAKSYYLFDGYAHLSSGLACGLAGLSAGMAIGIVGDAGVRANAQQPKLFVGMILILIFAEALALYGLIVGIILSSRAGQSRAE.

Residues 1 to 10 (MSSTFSGDET) lie on the Lumenal side of the membrane. Residues 11-33 (APFFGFLGAAAALVFSCMGAAYG) traverse the membrane as a helical segment. Residues 34–55 (TAKSGVGVASMGVMRPELVMKS) lie on the Cytoplasmic side of the membrane. The chain crosses the membrane as a helical span at residues 56-76 (IVPVVMAGVLGIYGLIIAVII). At 77 to 95 (STGINPKAKSYYLFDGYAH) the chain is on the lumenal side. A helical membrane pass occupies residues 96 to 117 (LSSGLACGLAGLSAGMAIGIVG). Residues 118 to 129 (DAGVRANAQQPK) lie on the Cytoplasmic side of the membrane. The chain crosses the membrane as a helical span at residues 130-155 (LFVGMILILIFAEALALYGLIVGIIL). The Lumenal segment spans residues 156–165 (SSRAGQSRAE).

The protein belongs to the V-ATPase proteolipid subunit family. In terms of assembly, V-ATPase is a heteromultimeric enzyme composed of a peripheral catalytic V1 complex (main components: subunits A, B, C, D, E, and F) attached to an integral membrane V0 proton pore complex (main component: the proteolipid protein; which is present as a hexamer that forms the proton-conducting pore).

Its subcellular location is the vacuole membrane. In terms of biological role, proton-conducting pore forming subunit of the membrane integral V0 complex of vacuolar ATPase. V-ATPase is responsible for acidifying a variety of intracellular compartments in eukaryotic cells. This Gossypium hirsutum (Upland cotton) protein is V-type proton ATPase 16 kDa proteolipid subunit (CVA16-2).